Reading from the N-terminus, the 93-residue chain is Cobalt transport protein CbiN (93 aa).

The next 2 helical transmembrane spans lie at 5–25 and 63–83; these read LMLL…NHGG and LLFT…LGYC.

This sequence belongs to the CbiN family. Forms an energy-coupling factor (ECF) transporter complex composed of an ATP-binding protein (A component, CbiO), a transmembrane protein (T component, CbiQ) and 2 possible substrate-capture proteins (S components, CbiM and CbiN) of unknown stoichimetry.

It localises to the cell inner membrane. Its pathway is cofactor biosynthesis; adenosylcobalamin biosynthesis. Part of the energy-coupling factor (ECF) transporter complex CbiMNOQ involved in cobalt import. In Salmonella agona (strain SL483), this protein is Cobalt transport protein CbiN.